Consider the following 276-residue polypeptide: NH(3)-dependent NAD(+) synthetase (276 aa).

Position 43–50 (Gly-43–Ser-50) interacts with ATP. Asp-49 contributes to the Mg(2+) binding site. Position 146 (Arg-146) interacts with deamido-NAD(+). An ATP-binding site is contributed by Thr-166. A Mg(2+)-binding site is contributed by Glu-171. Deamido-NAD(+) contacts are provided by Lys-179 and Asp-186. ATP is bound by residues Lys-195 and Thr-217. His-266 to Lys-267 serves as a coordination point for deamido-NAD(+).

It belongs to the NAD synthetase family. As to quaternary structure, homodimer.

The enzyme catalyses deamido-NAD(+) + NH4(+) + ATP = AMP + diphosphate + NAD(+) + H(+). The protein operates within cofactor biosynthesis; NAD(+) biosynthesis; NAD(+) from deamido-NAD(+) (ammonia route): step 1/1. Catalyzes the ATP-dependent amidation of deamido-NAD to form NAD. Uses ammonia as a nitrogen source. The protein is NH(3)-dependent NAD(+) synthetase of Psychromonas ingrahamii (strain DSM 17664 / CCUG 51855 / 37).